The following is a 559-amino-acid chain: Glucose-6-phosphate isomerase (559 aa).

The Proton donor role is filled by E363. Active-site residues include H394 and K523.

Belongs to the GPI family.

Its subcellular location is the cytoplasm. It carries out the reaction alpha-D-glucose 6-phosphate = beta-D-fructose 6-phosphate. It functions in the pathway carbohydrate biosynthesis; gluconeogenesis. It participates in carbohydrate degradation; glycolysis; D-glyceraldehyde 3-phosphate and glycerone phosphate from D-glucose: step 2/4. Functionally, catalyzes the reversible isomerization of glucose-6-phosphate to fructose-6-phosphate. The chain is Glucose-6-phosphate isomerase from Bartonella quintana (strain Toulouse) (Rochalimaea quintana).